The following is a 545-amino-acid chain: Sphingosine-1-phosphate lyase (545 aa).

Topologically, residues 1–26 are lumenal; it reads MRPFSGSDCLKPVTEGINRAFGAKEP. The chain crosses the membrane as a helical; Signal-anchor for type III membrane protein span at residues 27-47; sequence WQVATITATTVLGGVWLWTVI. Residues 48–545 are Cytoplasmic-facing; the sequence is CQDENLYIRG…HSMYYTPSQK (498 aa). Residue Lys-342 is modified to N6-(pyridoxal phosphate)lysine.

This sequence belongs to the group II decarboxylase family. Sphingosine-1-phosphate lyase subfamily. The cofactor is pyridoxal 5'-phosphate. In terms of tissue distribution, localized to the developing gut primordium during embryogenesis.

It is found in the endoplasmic reticulum membrane. The catalysed reaction is sphinganine 1-phosphate = hexadecanal + phosphoethanolamine. It functions in the pathway lipid metabolism; sphingolipid metabolism. Functionally, cleaves phosphorylated sphingoid bases (PSBs), such as sphingosine-1-phosphate, into fatty aldehydes and phosphoethanolamine. Sphingolipid catabolism is required for normal development including viability, reproduction and muscle development. In Drosophila melanogaster (Fruit fly), this protein is Sphingosine-1-phosphate lyase.